A 470-amino-acid polypeptide reads, in one-letter code: Mitogen-activated protein kinase 15 (470 aa).

A Protein kinase domain is found at 13–306; that stretch reads FDLQKRLGKG…VEQCLVHPYV (294 aa). ATP-binding positions include 19-27 and Lys42; that span reads LGKGAYGIV. Asp137 functions as the Proton acceptor in the catalytic mechanism. At Thr178 the chain carries Phosphothreonine. A TXY motif is present at residues 178–180; it reads TEY. Phosphotyrosine is present on Tyr180. Residues 362–445 are disordered; the sequence is PYGEDKSRAP…PSSIKQRRRS (84 aa). A compositionally biased stretch (low complexity) spans 394–406; sequence MDKNNSSSHDSSS. The segment covering 409-426 has biased composition (basic and acidic residues); that stretch reads LRERAASAESRTSKDSNG.

The protein belongs to the protein kinase superfamily. CMGC Ser/Thr protein kinase family. MAP kinase subfamily. Mg(2+) serves as cofactor. Post-translationally, dually phosphorylated on Thr-178 and Tyr-180, which activates the enzyme. In terms of tissue distribution, expressed in the URX neuron and in many other head sensory neurons. Isoform a: Expressed in head and tail ciliated sensory neurons, and in mid-body neurons. Isoform c: Expressed in head and tail ciliated sensory neurons, and in mid-body neurons.

The protein resides in the cell projection. It is found in the cilium. It localises to the cilium membrane. Its subcellular location is the cytoplasm. The protein localises to the cytoskeleton. The protein resides in the cilium axoneme. It is found in the cilium basal body. It localises to the cell junction. Its subcellular location is the perikaryon. The protein localises to the dendrite. The catalysed reaction is L-seryl-[protein] + ATP = O-phospho-L-seryl-[protein] + ADP + H(+). The enzyme catalyses L-threonyl-[protein] + ATP = O-phospho-L-threonyl-[protein] + ADP + H(+). With respect to regulation, activated by threonine and tyrosine phosphorylation. In terms of biological role, atypical MAPK protein. Regulates primary cilium formation in sensory neurons and the localization of ciliary proteins involved in cilium structure, transport, and signaling. Acts in dopamine (DA) neurons to support synaptic membrane dat-1 availability via activation of rho-1 thereby sustaining normal levels of DA clearance. Plays a role in male mating behavior, probably in part through regulating the localization of the polycystin pkd-2. Functions postembryonically in the URX sensory neurons to constrain URX dendrite growth throughout lifetime, probably by restricting expansion of the subcellular sensory compartment at the dendrite ending. The protein is Mitogen-activated protein kinase 15 of Caenorhabditis elegans.